We begin with the raw amino-acid sequence, 172 residues long: C-phycocyanin beta chain (172 aa).

Residue asparagine 72 is modified to N4-methylasparagine. Positions 82 and 153 each coordinate (2R,3E)-phycocyanobilin.

The protein belongs to the phycobiliprotein family. As to quaternary structure, heterodimer of an alpha and a beta subunit, which further assembles into trimers and the trimers into hexamers. The basic functional unit of phycobiliproteins is a ring-shaped hexamer formed from two back-to-back trimers contacting via the alpha chain subunits. The trimers are composed of alpha/beta subunit heterodimers arranged around a three-fold axis of symmetry. The phycoerythrins also contain a gamma subunit which is located in the center of the hexamer. Post-translationally, contains two covalently linked bilin chromophores.

It is found in the plastid. The protein localises to the chloroplast thylakoid membrane. In terms of biological role, light-harvesting photosynthetic bile pigment-protein from the phycobiliprotein complex (phycobilisome, PBS). Phycocyanin is the major phycobiliprotein in the PBS rod. This Pyropia yezoensis (Susabi-nori) protein is C-phycocyanin beta chain (cpcB).